The sequence spans 119 residues: Holo-[acyl-carrier-protein] synthase (119 aa).

D8 and E58 together coordinate Mg(2+).

The protein belongs to the P-Pant transferase superfamily. AcpS family. Requires Mg(2+) as cofactor.

Its subcellular location is the cytoplasm. The enzyme catalyses apo-[ACP] + CoA = holo-[ACP] + adenosine 3',5'-bisphosphate + H(+). In terms of biological role, transfers the 4'-phosphopantetheine moiety from coenzyme A to a Ser of acyl-carrier-protein. This Bacillus cereus (strain G9842) protein is Holo-[acyl-carrier-protein] synthase.